Here is a 530-residue protein sequence, read N- to C-terminus: Na(+)/H(+) antiporter NhaB (530 aa).

10 helical membrane-spanning segments follow: residues 13–33 (FLGQAPAWYKYTIVAFLLINP), 67–87 (PGGLLAIEAVMIGLTSAETVL), 90–110 (VVGNIEVMLLLIFMVAGIYFL), 138–158 (AAALLSAFLDALTVTAVVIAV), 205–225 (LLMHAAVGTALGGVCTLVGEP), 245–265 (MAPITLPVLVMGFFTCAFLEF), 302–333 (LVIQAITAVWLVIGLATHAASVGLVGLTVIIL), 350–370 (FEEALPFTALLTVFFAVVAVI), 449–469 (VATPNGQAAFLFLLTSALAPL), and 477–497 (MVIMALPYTIVMSITGLVMTA).

The protein belongs to the NhaB Na(+)/H(+) (TC 2.A.34) antiporter family.

It localises to the cell inner membrane. It catalyses the reaction 2 Na(+)(in) + 3 H(+)(out) = 2 Na(+)(out) + 3 H(+)(in). Its function is as follows. Na(+)/H(+) antiporter that extrudes sodium in exchange for external protons. The chain is Na(+)/H(+) antiporter NhaB from Alcanivorax borkumensis (strain ATCC 700651 / DSM 11573 / NCIMB 13689 / SK2).